Reading from the N-terminus, the 454-residue chain is Transcription factor bHLH123 (454 aa).

Positions 101-113 are enriched in low complexity; it reads SNANANTTSSTSS. Disordered stretches follow at residues 101-127, 185-228, 270-348, and 398-417; these read SNAN…HHQA, ATTT…QFGS, AAAG…KRKE, and GASL…VSEE. Polar residues-rich tracts occupy residues 185–195 and 207–228; these read ATTTTPNSSSG and SSDQ…QFGS. Residues 303–324 are compositionally biased toward basic and acidic residues; the sequence is EQPKNISEIRDSSSNEVKRGGN. The region spanning 334–383 is the bHLH domain; it reads KSEAASPSPAFKRKEKMGDRIAALQQLVSPFGKTDAASVLSEAIEYIKFL.

Homodimer.

The protein resides in the nucleus. The sequence is that of Transcription factor bHLH123 (BHLH123) from Arabidopsis thaliana (Mouse-ear cress).